The primary structure comprises 283 residues: Thymidylate synthase (283 aa).

R33 contributes to the dUMP binding site. H63 is a binding site for (6R)-5,10-methylene-5,6,7,8-tetrahydrofolate. A dUMP-binding site is contributed by 138–139 (RR). Catalysis depends on C158, which acts as the Nucleophile. DUMP-binding positions include 185-188 (RSAD), N196, and 226-228 (HIY). A (6R)-5,10-methylene-5,6,7,8-tetrahydrofolate-binding site is contributed by D188. A282 is a binding site for (6R)-5,10-methylene-5,6,7,8-tetrahydrofolate.

This sequence belongs to the thymidylate synthase family. Bacterial-type ThyA subfamily. In terms of assembly, homodimer.

The protein localises to the cytoplasm. The enzyme catalyses dUMP + (6R)-5,10-methylene-5,6,7,8-tetrahydrofolate = 7,8-dihydrofolate + dTMP. It participates in pyrimidine metabolism; dTTP biosynthesis. Its function is as follows. Catalyzes the reductive methylation of 2'-deoxyuridine-5'-monophosphate (dUMP) to 2'-deoxythymidine-5'-monophosphate (dTMP) while utilizing 5,10-methylenetetrahydrofolate (mTHF) as the methyl donor and reductant in the reaction, yielding dihydrofolate (DHF) as a by-product. This enzymatic reaction provides an intracellular de novo source of dTMP, an essential precursor for DNA biosynthesis. In Methylibium petroleiphilum (strain ATCC BAA-1232 / LMG 22953 / PM1), this protein is Thymidylate synthase.